A 131-amino-acid polypeptide reads, in one-letter code: Profilin-11 (131 aa).

Residues Cys-13 and Cys-115 are joined by a disulfide bond. Positions 81–97 (AVIRGKKGSGGITVKKT) match the Involved in PIP2 interaction motif. Thr-111 is modified (phosphothreonine).

Belongs to the profilin family. Occurs in many kinds of cells as a complex with monomeric actin in a 1:1 ratio. In terms of processing, phosphorylated by MAP kinases.

The protein localises to the cytoplasm. It is found in the cytoskeleton. Its function is as follows. Binds to actin and affects the structure of the cytoskeleton. At high concentrations, profilin prevents the polymerization of actin, whereas it enhances it at low concentrations. The polypeptide is Profilin-11 (Zea mays (Maize)).